Here is a 342-residue protein sequence, read N- to C-terminus: MLKFIQNNREITALLAVVLLFVLPGFLDRQYLSVQTLTMVYSSAQILILLAMGATLVMLTRNIDVSVGSITGMCAVLLGMLLNAGYSLPVACVTTLLLGLLAGFFNGVLVAWLKIPAIVATLGTLGLYRGIMLLWTGGKWIEGLPAELKQLSAPLLFGVSAIGWLTIILVAFMAWLLAKTAFGRSFYATGDNLQGARQLGVRTEAIRIVAFSLNGCMAALAGIVFASQIGFIPNQTGTGLEMKAIAACVLGGISLLGGSGAIIGAVLGAWFLTQIDSVLVLLRIPAWWNDFIAGLVLLAVLVFDGRLRCALERNLRRQKYARFMTPPPSVKPASSGKKREAA.

Over M1–A13 the chain is Periplasmic. A helical transmembrane segment spans residues L14–V34. At Q35–T38 the chain is on the cytoplasmic side. A helical membrane pass occupies residues M39–L59. Over T60–S69 the chain is Periplasmic. Residues I70–V90 form a helical membrane-spanning segment. Topologically, residues A91–C92 are cytoplasmic. A helical transmembrane segment spans residues V93–L113. Residue K114 is a topological domain, periplasmic. A helical membrane pass occupies residues I115–W135. Residues T136–P154 lie on the Cytoplasmic side of the membrane. A helical membrane pass occupies residues L155–W175. At L176–S212 the chain is on the periplasmic side. Residues L213–P233 form a helical membrane-spanning segment. Residues N234–G251 are Cytoplasmic-facing. Residues G252 to L272 form a helical membrane-spanning segment. At T273–R283 the chain is on the periplasmic side. Residues I284–D304 form a helical membrane-spanning segment. Topologically, residues G305–A342 are cytoplasmic.

The protein belongs to the binding-protein-dependent transport system permease family. AraH/RbsC subfamily. The complex is composed of two ATP-binding proteins (LsrA), two transmembrane proteins (LsrC and LsrD) and a solute-binding protein (LsrB).

Its subcellular location is the cell inner membrane. Its function is as follows. Part of the ABC transporter complex LsrABCD involved in autoinducer 2 (AI-2) import. Probably responsible for the translocation of the substrate across the membrane. The chain is Autoinducer 2 import system permease protein LsrC (lsrC) from Escherichia coli O9:H4 (strain HS).